The sequence spans 452 residues: Maltoporin (452 aa).

Residues 1–25 (MMITLRKLPLAVAVAAGVMSAQAMA) form the signal peptide.

This sequence belongs to the porin LamB (TC 1.B.3) family. Homotrimer formed of three 18-stranded antiparallel beta-barrels, containing three independent channels.

The protein localises to the cell outer membrane. The catalysed reaction is beta-maltose(in) = beta-maltose(out). Its function is as follows. Involved in the transport of maltose and maltodextrins. This chain is Maltoporin, found in Salmonella agona (strain SL483).